A 37-amino-acid chain; its full sequence is LYSIASSAIGDFGFGDSKLDFAVSRGIDDIMVDLAAK.

NADP(+) is bound by residues Ser3 and 24–25; that span reads SR.

It belongs to the ferredoxin--NADP reductase type 1 family. The cofactor is FAD.

The protein localises to the plastid. The protein resides in the chloroplast stroma. It localises to the chloroplast thylakoid membrane. It catalyses the reaction 2 reduced [2Fe-2S]-[ferredoxin] + NADP(+) + H(+) = 2 oxidized [2Fe-2S]-[ferredoxin] + NADPH. It participates in energy metabolism; photosynthesis. May play a key role in regulating the relative amounts of cyclic and non-cyclic electron flow to meet the demands of the plant for ATP and reducing power. The polypeptide is Ferredoxin--NADP reductase, chloroplastic (Imperata cylindrica (Cogon grass)).